We begin with the raw amino-acid sequence, 370 residues long: Natural killer cell receptor 2B4 (370 aa).

Positions 1–21 are cleaved as a signal peptide; it reads MLGQVVTLILLLLLKVYQGKG. Ig-like domains are found at residues 22-127 and 131-215; these read CQGS…FVFE and PDKV…LNLT. At 22-229 the chain is on the extracellular side; the sequence is CQGSADHVVS…NAHQEFRFWP (208 aa). Residues Asn-71, Asn-77, Asn-89, Asn-164, Asn-181, Asn-192, Asn-200, and Asn-213 are each glycosylated (N-linked (GlcNAc...) asparagine). Cys-157 and Cys-199 form a disulfide bridge. The chain crosses the membrane as a helical span at residues 230 to 250; sequence FLVIIVILSALFLGTLACFCV. Residues 251 to 370 are Cytoplasmic-facing; that stretch reads WRRKRKEKQS…KELENFDVYS (120 aa). 4 consecutive short sequence motifs (ITSM) follow at residues 269–274, 295–300, 315–320, and 340–345; these read TIYEDV, TIYSMI, TLYSLI, and TIYEVI. Tyr-271 carries the post-translational modification Phosphotyrosine. Residue Tyr-297 is modified to Phosphotyrosine; by FYN. A Phosphotyrosine modification is found at Tyr-317. Positions 324–370 are disordered; that stretch reads RKSGSRKRNHSPSFNSTIYEVIGKSQPKAQNPARLSRKELENFDVYS. Tyr-342 is subject to Phosphotyrosine; by FYN.

Interacts with CD48. Interacts (via phosphorylated ITSM 1-4) with SH2D1A (via SH2 domain); SH2D1A probably mediates association with FYN. Interacts (via phosphorylated ITSM 3) with PTPN11/SHP-2, INPP5D/SHIP1, PTPN6/SHP-1 and CSK; binding of SH2D1A/SAP prevents association with PTPN11, PTPN6 and CSK; conflictingly a similar association has been described for phosphorylated ITSM 1 also including GRB2 and PLCG1. Interacts weakly (via phosphorylated ITSM 2) with PTPN11/SHP-2 and CSK. Interacts with SH2D1B. Interacts with PIK3R1; PI3K recruits SH2D1A. Interacts with MHC class I proteins; the interaction is proposed to prevent self-killing of NK cells. N-linked glycosylation is essential for the binding to its ligand CD48. Also O-glycosylated, in contrast, O-linked sialylation has a negative impact on ligand binding. Post-translationally, phosphorylated by FYN and CSK on tyrosine residues following activation. Coligation with inhibitory receptors such as KIR2DL1 inhibits phosphorylation upon contact of NK cells with sensitive target cells. In terms of tissue distribution, expressed in spleen, PBL, followed by lung, liver, testis and small intestine. Expressed in all natural killer (NK) cells, monocytes and basophils, TCR-gamma/delta+ T-cells, monocytes, basophils, and on a subset of CD8(+) T-cells.

The protein localises to the membrane. Its subcellular location is the cell membrane. The protein resides in the membrane raft. Heterophilic receptor of the signaling lymphocytic activation molecule (SLAM) family; its ligand is CD48. SLAM receptors triggered by homo- or heterotypic cell-cell interactions are modulating the activation and differentiation of a wide variety of immune cells and thus are involved in the regulation and interconnection of both innate and adaptive immune response. Activities are controlled by presence or absence of small cytoplasmic adapter proteins, SH2D1A/SAP and/or SH2D1B/EAT-2. Acts as activating natural killer (NK) cell receptor. Activating function implicates association with SH2D1A and FYN. Downstreaming signaling involves predominantly VAV1, and, to a lesser degree, INPP5D/SHIP1 and CBL. Signal attenuation in the absence of SH2D1A is proposed to be dependent on INPP5D and to a lesser extent PTPN6/SHP-1 and PTPN11/SHP-2. Stimulates NK cell cytotoxicity, production of IFN-gamma and granule exocytosis. Optimal expansion and activation of NK cells seems to be dependent on the engagement of CD244 with CD48 expressed on neighboring NK cells. Acts as costimulator in NK activation by enhancing signals by other NK receptors such as NCR3 and NCR1. At early stages of NK cell differentiation may function as an inhibitory receptor possibly ensuring the self-tolerance of developing NK cells. Involved in the regulation of CD8(+) T-cell proliferation; expression on activated T-cells and binding to CD48 provides costimulatory-like function for neighboring T-cells. Inhibits inflammatory responses in dendritic cells (DCs). In Homo sapiens (Human), this protein is Natural killer cell receptor 2B4 (CD244).